The primary structure comprises 370 residues: A-type ATP synthase subunit C (370 aa).

It belongs to the V-ATPase V0D/AC39 subunit family. In terms of assembly, has multiple subunits with at least A(3), B(3), C, D, E, F, H, I and proteolipid K(x).

Its subcellular location is the cell membrane. In terms of biological role, component of the A-type ATP synthase that produces ATP from ADP in the presence of a proton gradient across the membrane. The sequence is that of A-type ATP synthase subunit C from Pyrococcus abyssi (strain GE5 / Orsay).